The primary structure comprises 86 residues: Large ribosomal subunit protein bL27 (86 aa).

The segment at 1 to 23 is disordered; that stretch reads MAHKKGTGSTRNGRDSNSKRLGV.

The protein belongs to the bacterial ribosomal protein bL27 family.

This Prochlorococcus marinus (strain MIT 9515) protein is Large ribosomal subunit protein bL27.